Reading from the N-terminus, the 154-residue chain is Small ribosomal subunit protein uS19B (154 aa).

Serine 63 carries the post-translational modification Phosphoserine.

Belongs to the universal ribosomal protein uS19 family. In terms of assembly, component of the small ribosomal subunit (SSU). Mature yeast ribosomes consist of a small (40S) and a large (60S) subunit. The 40S small subunit contains 1 molecule of ribosomal RNA (18S rRNA) and at least 33 different proteins. The large 60S subunit contains 3 rRNA molecules (25S, 5.8S and 5S rRNA) and at least 46 different proteins.

It is found in the cytoplasm. Its subcellular location is the nucleus. It localises to the nucleolus. Component of the ribosome, a large ribonucleoprotein complex responsible for the synthesis of proteins in the cell. The small ribosomal subunit (SSU) binds messenger RNAs (mRNAs) and translates the encoded message by selecting cognate aminoacyl-transfer RNA (tRNA) molecules. The large subunit (LSU) contains the ribosomal catalytic site termed the peptidyl transferase center (PTC), which catalyzes the formation of peptide bonds, thereby polymerizing the amino acids delivered by tRNAs into a polypeptide chain. The nascent polypeptides leave the ribosome through a tunnel in the LSU and interact with protein factors that function in enzymatic processing, targeting, and the membrane insertion of nascent chains at the exit of the ribosomal tunnel. uS19 is involved in the nuclear export of the small ribosomal subunit precursor. Has a role in the late stage of the assembly of pre-40S particles within the nucleus and controls their export to the cytoplasm. In Schizosaccharomyces pombe (strain 972 / ATCC 24843) (Fission yeast), this protein is Small ribosomal subunit protein uS19B (rps1502).